Here is a 478-residue protein sequence, read N- to C-terminus: Serralysin C (478 aa).

Residues 1–17 (MEKNLSSRDDDALHSLS) constitute a propeptide that is removed on maturation. Histidine 187 provides a ligand contact to Zn(2+). Glutamate 188 is an active-site residue. Zn(2+) is bound by residues histidine 191 and tyrosine 227. Ca(2+) is bound by residues arginine 264, glycine 266, aspartate 296, glycine 298, glycine 299, aspartate 301, threonine 338, glutamate 340, glycine 345, glycine 347, aspartate 349, asparagine 354, alanine 356, asparagine 358, glycine 362, glycine 363, alanine 364, glycine 365, aspartate 367, glycine 371, glycine 372, glycine 374, aspartate 376, glycine 380, glycine 381, glycine 383, aspartate 385, aspartate 394, aspartate 401, and aspartate 411. Hemolysin-type calcium-binding repeat units follow at residues 343-360 (IGGS…DNTL) and 361-378 (RGGA…ADRL).

The protein belongs to the peptidase M10B family. It depends on Ca(2+) as a cofactor. Requires Zn(2+) as cofactor.

It is found in the secreted. The enzyme catalyses Preferential cleavage of bonds with hydrophobic residues in P1'.. The polypeptide is Serralysin C (prtC) (Dickeya chrysanthemi (Pectobacterium chrysanthemi)).